A 270-amino-acid polypeptide reads, in one-letter code: 3-methyl-2-oxobutanoate hydroxymethyltransferase (270 aa).

Positions 50 and 89 each coordinate Mg(2+). Residues 50-51, aspartate 89, and lysine 118 contribute to the 3-methyl-2-oxobutanoate site; that span reads DS. Glutamate 120 is a Mg(2+) binding site. Residue glutamate 187 is the Proton acceptor of the active site.

Belongs to the PanB family. In terms of assembly, homodecamer; pentamer of dimers. Mg(2+) serves as cofactor.

The protein localises to the cytoplasm. The enzyme catalyses 3-methyl-2-oxobutanoate + (6R)-5,10-methylene-5,6,7,8-tetrahydrofolate + H2O = 2-dehydropantoate + (6S)-5,6,7,8-tetrahydrofolate. It participates in cofactor biosynthesis; (R)-pantothenate biosynthesis; (R)-pantoate from 3-methyl-2-oxobutanoate: step 1/2. Catalyzes the reversible reaction in which hydroxymethyl group from 5,10-methylenetetrahydrofolate is transferred onto alpha-ketoisovalerate to form ketopantoate. This is 3-methyl-2-oxobutanoate hydroxymethyltransferase from Helicobacter pylori (strain P12).